A 275-amino-acid polypeptide reads, in one-letter code: Translation initiation factor 2 subunit alpha (275 aa).

The 72-residue stretch at 12–83 (GEFVVATVKN…EKGHIDLSLK (72 aa)) folds into the S1 motif domain.

This sequence belongs to the eIF-2-alpha family. As to quaternary structure, heterotrimer composed of an alpha, a beta and a gamma chain.

In terms of biological role, eIF-2 functions in the early steps of protein synthesis by forming a ternary complex with GTP and initiator tRNA. This is Translation initiation factor 2 subunit alpha from Thermococcus kodakarensis (strain ATCC BAA-918 / JCM 12380 / KOD1) (Pyrococcus kodakaraensis (strain KOD1)).